Reading from the N-terminus, the 338-residue chain is Glyceraldehyde-3-phosphate dehydrogenase (338 aa).

NAD(+) is bound by residues 13 to 14, D35, and R80; that span reads RI. D-glyceraldehyde 3-phosphate-binding positions include 151-153, T182, 211-212, and R234; these read SCT and TG. Catalysis depends on C152, which acts as the Nucleophile. N316 contributes to the NAD(+) binding site.

This sequence belongs to the glyceraldehyde-3-phosphate dehydrogenase family. In terms of assembly, homotetramer.

The protein resides in the cytoplasm. It carries out the reaction D-glyceraldehyde 3-phosphate + phosphate + NAD(+) = (2R)-3-phospho-glyceroyl phosphate + NADH + H(+). It functions in the pathway carbohydrate degradation; glycolysis; pyruvate from D-glyceraldehyde 3-phosphate: step 1/5. This Colletotrichum gloeosporioides (Anthracnose fungus) protein is Glyceraldehyde-3-phosphate dehydrogenase (GPDA).